A 425-amino-acid polypeptide reads, in one-letter code: MTRPSVSTFKAPKGTYDLLPPDSAKFLAVREAIAAPLRNSGYGYIETPGFENVELFARGVGESTDIVTKEMYVFETKGGDRLALRPETTAPVLRAVLEANLHKAGNLPVKVWYSGSQYRYERPQKGRYRHFSQVGAEAIGAEDPALDAELIILADQSYRALGLQDFRILLNSLGDQECRPVYRAALQDFLRGLDLDEETLRRAEINPLRVLDDKRPDVQKQLTEAPLLRDYLCDACKAYHEEVRELITAAGVVFEDDPKLVRGLDYYTRTTFEFVHDGLGSQSAVGGGGRYDGLSEMIGGPSLPSVGWALGVDRTVLALEAEGIELDIPSATSVFAVPLGEEARRILFAKVTELRKNGVAADFSYGGKGLKAAMKAANRSGARYTLVLGERDLAEGVVQLKDMESGEQTAIGVNEIVAELESRLG.

It belongs to the class-II aminoacyl-tRNA synthetase family. As to quaternary structure, homodimer.

It localises to the cytoplasm. The enzyme catalyses tRNA(His) + L-histidine + ATP = L-histidyl-tRNA(His) + AMP + diphosphate + H(+). This is Histidine--tRNA ligase from Streptomyces coelicolor (strain ATCC BAA-471 / A3(2) / M145).